We begin with the raw amino-acid sequence, 293 residues long: Ethanolamine ammonia-lyase small subunit (293 aa).

Adenosylcob(III)alamin-binding residues include Val207 and Glu228.

The protein belongs to the EutC family. As to quaternary structure, the basic unit is a heterodimer which dimerizes to form tetramers. The heterotetramers trimerize; 6 large subunits form a core ring with 6 small subunits projecting outwards. Adenosylcob(III)alamin serves as cofactor.

The protein resides in the bacterial microcompartment. The enzyme catalyses ethanolamine = acetaldehyde + NH4(+). The protein operates within amine and polyamine degradation; ethanolamine degradation. In terms of biological role, catalyzes the deamination of various vicinal amino-alcohols to oxo compounds. Allows this organism to utilize ethanolamine as the sole source of nitrogen and carbon in the presence of external vitamin B12. This is Ethanolamine ammonia-lyase small subunit from Listeria monocytogenes serotype 4b (strain CLIP80459).